Reading from the N-terminus, the 380-residue chain is DNA replication and repair protein RecF (380 aa).

ATP is bound at residue 30-37; the sequence is GPNGFGKT.

This sequence belongs to the RecF family.

It is found in the cytoplasm. Functionally, the RecF protein is involved in DNA metabolism; it is required for DNA replication and normal SOS inducibility. RecF binds preferentially to single-stranded, linear DNA. It also seems to bind ATP. This is DNA replication and repair protein RecF from Mycobacterium sp. (strain JLS).